The following is a 258-amino-acid chain: Tryptophan synthase alpha chain (258 aa).

Residues Glu-52 and Asp-63 each act as proton acceptor in the active site.

It belongs to the TrpA family. As to quaternary structure, tetramer of two alpha and two beta chains.

The catalysed reaction is (1S,2R)-1-C-(indol-3-yl)glycerol 3-phosphate + L-serine = D-glyceraldehyde 3-phosphate + L-tryptophan + H2O. It functions in the pathway amino-acid biosynthesis; L-tryptophan biosynthesis; L-tryptophan from chorismate: step 5/5. In terms of biological role, the alpha subunit is responsible for the aldol cleavage of indoleglycerol phosphate to indole and glyceraldehyde 3-phosphate. The polypeptide is Tryptophan synthase alpha chain (Streptococcus pneumoniae (strain ATCC 700669 / Spain 23F-1)).